Reading from the N-terminus, the 311-residue chain is Aspartate carbamoyltransferase catalytic subunit (311 aa).

The carbamoyl phosphate site is built by Arg58 and Thr59. Lys86 serves as a coordination point for L-aspartate. Carbamoyl phosphate contacts are provided by Arg108, His136, and Gln139. Arg169 and Arg224 together coordinate L-aspartate. Residues Gly265 and Pro266 each contribute to the carbamoyl phosphate site.

The protein belongs to the aspartate/ornithine carbamoyltransferase superfamily. ATCase family. In terms of assembly, heterododecamer (2C3:3R2) of six catalytic PyrB chains organized as two trimers (C3), and six regulatory PyrI chains organized as three dimers (R2).

The enzyme catalyses carbamoyl phosphate + L-aspartate = N-carbamoyl-L-aspartate + phosphate + H(+). The protein operates within pyrimidine metabolism; UMP biosynthesis via de novo pathway; (S)-dihydroorotate from bicarbonate: step 2/3. In terms of biological role, catalyzes the condensation of carbamoyl phosphate and aspartate to form carbamoyl aspartate and inorganic phosphate, the committed step in the de novo pyrimidine nucleotide biosynthesis pathway. In Geotalea uraniireducens (strain Rf4) (Geobacter uraniireducens), this protein is Aspartate carbamoyltransferase catalytic subunit.